A 126-amino-acid polypeptide reads, in one-letter code: Histone H2B (126 aa).

Low complexity predominate over residues 1–12 (MPEPAKSAPAPK). The segment at 1 to 36 (MPEPAKSAPAPKKGSKKAVTKTQKKGDKKRKKSRKE) is disordered. N6-acetyllysine occurs at positions 6 and 13. Residues 13-34 (KGSKKAVTKTQKKGDKKRKKSR) are compositionally biased toward basic residues. A Phosphoserine modification is found at S15. N6-acetyllysine occurs at positions 16 and 21. Residue K121 forms a Glycyl lysine isopeptide (Lys-Gly) (interchain with G-Cter in ubiquitin) linkage.

It belongs to the histone H2B family. As to quaternary structure, the nucleosome is a histone octamer containing two molecules each of H2A, H2B, H3 and H4 assembled in one H3-H4 heterotetramer and two H2A-H2B heterodimers. The octamer wraps approximately 147 bp of DNA. Post-translationally, monoubiquitination of Lys-121 by the RNF20/40 complex gives a specific tag for epigenetic transcriptional activation and is also prerequisite for histone H3 'Lys-4' and 'Lys-79' methylation. Phosphorylated on Ser-15 during apoptosis; which facilitates apoptotic chromatin condensation.

The protein resides in the nucleus. Its subcellular location is the chromosome. Core component of nucleosome. Nucleosomes wrap and compact DNA into chromatin, limiting DNA accessibility to the cellular machineries which require DNA as a template. Histones thereby play a central role in transcription regulation, DNA repair, DNA replication and chromosomal stability. DNA accessibility is regulated via a complex set of post-translational modifications of histones, also called histone code, and nucleosome remodeling. The polypeptide is Histone H2B (Cairina moschata (Muscovy duck)).